A 586-amino-acid polypeptide reads, in one-letter code: Aspartate--tRNA(Asp/Asn) ligase (586 aa).

Glutamate 176 contributes to the L-aspartate binding site. Residues glutamine 200 to lysine 203 form an aspartate region. L-aspartate is bound at residue arginine 222. Residues arginine 222–glutamate 224 and glutamine 231 contribute to the ATP site. Residue histidine 449 coordinates L-aspartate. Glutamate 483 contributes to the ATP binding site. Arginine 490 provides a ligand contact to L-aspartate. Glycine 535–arginine 538 contacts ATP.

This sequence belongs to the class-II aminoacyl-tRNA synthetase family. Type 1 subfamily. In terms of assembly, homodimer.

It localises to the cytoplasm. It carries out the reaction tRNA(Asx) + L-aspartate + ATP = L-aspartyl-tRNA(Asx) + AMP + diphosphate. Its function is as follows. Aspartyl-tRNA synthetase with relaxed tRNA specificity since it is able to aspartylate not only its cognate tRNA(Asp) but also tRNA(Asn). Reaction proceeds in two steps: L-aspartate is first activated by ATP to form Asp-AMP and then transferred to the acceptor end of tRNA(Asp/Asn). The polypeptide is Aspartate--tRNA(Asp/Asn) ligase (Brachyspira hyodysenteriae (strain ATCC 49526 / WA1)).